We begin with the raw amino-acid sequence, 392 residues long: MITLITEQLQKQTLDELKCTRFSISLPLPDHADISNCGNPFQLVSEGASWRGLPHCSCAEFQDSLNLSYHPSGLSLHLRPPSPGSSPQEQSLSQVLSPEPPDPEKLPVPPAPPSKRHCRSLSVPVDLSRWQPVWRPAPSKLWTPIKHRGSGGGGGPQVPHQSPPKRVSSLRFLQAPSASSQCAPAHRPYSPPFFSLALAQDSSHPSAASPQSGSWESDAESLSPCPPQRRFSLSPSLGPQASRFLPSARSSPASSPELPWRPRGLRNLPRSRSQPCDLDARKAGVKRRHEEDPRRLRPSLDFDKMNQKPYSGGLCLQETAREGSSISPPWFMACSPPPLSASCSPIGGSSQVLSESEEEEEGAVRWGRQALSKRTLCQQDFGDLDLNLIEEN.

At methionine 1 the chain carries N-acetylmethionine. Residues 76–120 (LHLRPPSPGSSPQEQSLSQVLSPEPPDPEKLPVPPAPPSKRHCRS) are disordered. Over residues 85–97 (SSPQEQSLSQVLS) the composition is skewed to low complexity. Serine 122 and serine 162 each carry phosphoserine. Disordered regions lie at residues 141–167 (LWTP…PKRV) and 201–294 (DSSH…EDPR). Polar residues predominate over residues 201 to 215 (DSSHPSAASPQSGSW). Serine 232, serine 234, serine 255, and serine 273 each carry phosphoserine. Over residues 241-256 (ASRFLPSARSSPASSP) the composition is skewed to low complexity. A compositionally biased stretch (basic and acidic residues) spans 278–294 (LDARKAGVKRRHEEDPR). Serine 299 is modified (phosphoserine).

The protein belongs to the FAM53 family.

The protein is Protein FAM53C of Bos taurus (Bovine).